We begin with the raw amino-acid sequence, 447 residues long: N-succinylarginine dihydrolase (447 aa).

Substrate is bound by residues 19-28, asparagine 110, and 137-138; these read AGLSFGNEAS and HR. Residue glutamate 174 is part of the active site. Arginine 212 provides a ligand contact to substrate. Histidine 248 is an active-site residue. Aspartate 250 and asparagine 359 together coordinate substrate. The Nucleophile role is filled by cysteine 365.

Belongs to the succinylarginine dihydrolase family. As to quaternary structure, homodimer.

It catalyses the reaction N(2)-succinyl-L-arginine + 2 H2O + 2 H(+) = N(2)-succinyl-L-ornithine + 2 NH4(+) + CO2. The protein operates within amino-acid degradation; L-arginine degradation via AST pathway; L-glutamate and succinate from L-arginine: step 2/5. Catalyzes the hydrolysis of N(2)-succinylarginine into N(2)-succinylornithine, ammonia and CO(2). This chain is N-succinylarginine dihydrolase, found in Salmonella dublin (strain CT_02021853).